The following is an 891-amino-acid chain: DNA mismatch repair protein MutS (891 aa).

643-650 (GPNMGGKS) is an ATP binding site.

Belongs to the DNA mismatch repair MutS family.

Its function is as follows. This protein is involved in the repair of mismatches in DNA. It is possible that it carries out the mismatch recognition step. This protein has a weak ATPase activity. This is DNA mismatch repair protein MutS from Xanthomonas campestris pv. campestris (strain ATCC 33913 / DSM 3586 / NCPPB 528 / LMG 568 / P 25).